A 490-amino-acid polypeptide reads, in one-letter code: Sushi domain-containing protein 4 (490 aa).

A disordered region spans residues 1-20 (MYHGMNPSNGDGFLEQQLQQ). Residues 1–41 (MYHGMNPSNGDGFLEQQLQQQQPQSPQRLLAVILWFQLALC) form the signal peptide. At 42–319 (FGPAQLTGGF…PSTHETLLTT (278 aa)) the chain is on the extracellular side. Sushi domains are found at residues 55–119 (NVCA…VCIQ), 120–179 (EDCR…ICQG), 178–239 (QGCL…RCLA), and 241–304 (EVCP…YCIK). 8 disulfide bridges follow: cysteine 57-cysteine 99, cysteine 85-cysteine 117, cysteine 122-cysteine 165, cysteine 147-cysteine 177, cysteine 180-cysteine 224, cysteine 210-cysteine 237, cysteine 243-cysteine 289, and cysteine 274-cysteine 302. 2 N-linked (GlcNAc...) asparagine glycosylation sites follow: asparagine 104 and asparagine 134. N-linked (GlcNAc...) asparagine glycosylation is present at asparagine 192. Residues 320 to 340 (WKIVAFTATSVLLVLLLVILA) form a helical membrane-spanning segment. Topologically, residues 341 to 490 (RMFQTKFKAH…DEIPLMEEDP (150 aa)) are cytoplasmic. The segment at 394 to 490 (YPASVGQGCP…DEIPLMEEDP (97 aa)) is disordered. Polar residues-rich tracts occupy residues 430 to 444 (CDSTSGSSEMLQSLY) and 461 to 475 (DTISSTAGEVASTSP). A compositionally biased stretch (acidic residues) spans 479–490 (IADEIPLMEEDP).

In terms of tissue distribution, high expression in brain and eye, with weaker expression in spinal cord and testis. Detected in white matter of brain and in the outer segments of photoreceptors.

It localises to the membrane. Acts as a complement inhibitor by disrupting the formation of the classical C3 convertase. Isoform 3 inhibits the classical complement pathway, while membrane-bound isoform 1 inhibits deposition of C3b via both the classical and alternative complement pathways. The polypeptide is Sushi domain-containing protein 4 (Susd4) (Mus musculus (Mouse)).